The following is a 97-amino-acid chain: Large ribosomal subunit protein bL31 (97 aa).

Residues 76-97 are disordered; that stretch reads KTPKKAKGKTEEYTKHRSLNEL. Residues 83-97 show a composition bias toward basic and acidic residues; it reads GKTEEYTKHRSLNEL.

The protein belongs to the bacterial ribosomal protein bL31 family. Type A subfamily. Part of the 50S ribosomal subunit.

Functionally, binds the 23S rRNA. The protein is Large ribosomal subunit protein bL31 of Mycoplasma pneumoniae (strain ATCC 29342 / M129 / Subtype 1) (Mycoplasmoides pneumoniae).